The primary structure comprises 291 residues: Aspartate carbamoyltransferase catalytic subunit (291 aa).

Carbamoyl phosphate-binding residues include Arg47 and Thr48. Position 75 (Lys75) interacts with L-aspartate. Carbamoyl phosphate contacts are provided by Arg97, His126, and Gln129. Residues Arg159 and Arg213 each contribute to the L-aspartate site. Carbamoyl phosphate is bound by residues Gly251 and Pro252.

Belongs to the aspartate/ornithine carbamoyltransferase superfamily. ATCase family. In terms of assembly, heterododecamer (2C3:3R2) of six catalytic PyrB chains organized as two trimers (C3), and six regulatory PyrI chains organized as three dimers (R2).

It carries out the reaction carbamoyl phosphate + L-aspartate = N-carbamoyl-L-aspartate + phosphate + H(+). The protein operates within pyrimidine metabolism; UMP biosynthesis via de novo pathway; (S)-dihydroorotate from bicarbonate: step 2/3. Catalyzes the condensation of carbamoyl phosphate and aspartate to form carbamoyl aspartate and inorganic phosphate, the committed step in the de novo pyrimidine nucleotide biosynthesis pathway. In Aquifex aeolicus (strain VF5), this protein is Aspartate carbamoyltransferase catalytic subunit.